The sequence spans 275 residues: MGMMKRQFEDVTRIVIKIGTSSLVLPTGKINLEKIDQLAFVISSLMNKGKEVILVSSGAMGFGLDILKMEKRPTNLAKQQAVSSVGQVAMMSLYSQIFAHYQTNVSQILLTRDVVVFPESLANVTNAFESLISLGIVPIVNENDAVSVDEMDHATKFGDNDRLSAVVAGITKADLLIMLSDIDGLFDKNPTIYEDAQLRSHVAVITQEIIASAGGAGSKFGTGGMLSKIQSAQMVFENKGQMVLMNGANPRDILRVLEGQPLGTWFKQIEEVTHD.

Lys17 is an ATP binding site. Positions 57, 144, and 160 each coordinate substrate. ATP is bound by residues 180-181 (SD) and 222-228 (TGGMLSK).

It belongs to the glutamate 5-kinase family.

The protein localises to the cytoplasm. The enzyme catalyses L-glutamate + ATP = L-glutamyl 5-phosphate + ADP. Its pathway is amino-acid biosynthesis; L-proline biosynthesis; L-glutamate 5-semialdehyde from L-glutamate: step 1/2. In terms of biological role, catalyzes the transfer of a phosphate group to glutamate to form L-glutamate 5-phosphate. This Streptococcus pyogenes serotype M12 (strain MGAS2096) protein is Glutamate 5-kinase.